Reading from the N-terminus, the 39-residue chain is Osmotin-like protein (39 aa).

The protein belongs to the thaumatin family. Post-translationally, contains intrachain disulfide bonds.

May be an important antifungal protein. The protein is Osmotin-like protein of Hevea brasiliensis (Para rubber tree).